Reading from the N-terminus, the 354-residue chain is Peroxisomal membrane protein PEX32 (354 aa).

5 helical membrane passes run leucine 24 to leucine 44, phenylalanine 63 to valine 83, leucine 84 to aspartate 104, glycine 151 to valine 171, and serine 173 to threonine 193. Asparagine 319 is a glycosylation site (N-linked (GlcNAc...) asparagine).

Belongs to the PEX28-32 family. PEX30/31 subfamily.

The protein resides in the peroxisome membrane. It is found in the endoplasmic reticulum membrane. With PEX24, contributes to tethering of peroxisomes to the endoplasmic reticulum for organelle biogenesis, positioning and segregation. This chain is Peroxisomal membrane protein PEX32, found in Ogataea parapolymorpha (strain ATCC 26012 / BCRC 20466 / JCM 22074 / NRRL Y-7560 / DL-1) (Yeast).